A 387-amino-acid chain; its full sequence is Probable serine protease FE772_23060 (387 aa).

It belongs to the peptidase S1 family.

In terms of biological role, possibly a dedicated protease for substrate gasdermin bGSDM; cleaves the bGSDM precursor, releasing the pore-forming moiety, which integrates into the membrane and triggers cell death. Involved in defense against bacteriophages. When this probable 4 gene operon (bGSDM-FE772_23060-FE772_23065-FE772_23070) is inserted into E.coli it provides nearly 100-fold protection against phages T5 and T6 and about 8-fold against phage T4. The operon without bGSDM no longer protects against phage. The sequence is that of Probable serine protease FE772_23060 from Lysobacter enzymogenes.